Here is a 113-residue protein sequence, read N- to C-terminus: Hydrogenase maturation factor HypA (113 aa).

His-2 contributes to the Ni(2+) binding site. Cys-73, Cys-76, Cys-89, and Cys-92 together coordinate Zn(2+).

Belongs to the HypA/HybF family.

Its function is as follows. Involved in the maturation of [NiFe] hydrogenases. Required for nickel insertion into the metal center of the hydrogenase. In Chlorobium phaeobacteroides (strain BS1), this protein is Hydrogenase maturation factor HypA.